The chain runs to 248 residues: DNA polymerase sliding clamp 2 (248 aa).

It belongs to the PCNA family. The subunits circularize to form a toroid; DNA passes through its center. Replication factor C (RFC) is required to load the toroid on the DNA. Forms a dimeric complex with PCNA3 and trimeric complexes PCNA123 and PCNA323; does not form homotrimers. Crystal structures show a heterotetramer of 2 PCNA2 and 2 PCNA3, which would be large enough to clamp a Holliday junction.

In terms of biological role, sliding clamp subunit that acts as a moving platform for DNA processing. Responsible for tethering the catalytic subunit of DNA polymerase and other proteins to DNA during high-speed replication. Both trimeric complexes inhibit DNA ligase and both 3'-5' and 5'-3' activity of Hel308 (Hjm) helicase, but stimulate Hjc, the Holliday junction cleavage enzyme. The polypeptide is DNA polymerase sliding clamp 2 (Sulfurisphaera tokodaii (strain DSM 16993 / JCM 10545 / NBRC 100140 / 7) (Sulfolobus tokodaii)).